A 229-amino-acid polypeptide reads, in one-letter code: Glutathione S-transferase 1 (229 aa).

Residues 2 to 86 (AQFTLWSHAH…YLADKYDTER (85 aa)) form the GST N-terminal domain. The GST C-terminal domain maps to 93-229 (DHPEYYKVIQ…FEERSKALDN (137 aa)).

Belongs to the GST superfamily.

The catalysed reaction is RX + glutathione = an S-substituted glutathione + a halide anion + H(+). Involved in the oxidative stress response and detoxification. The protein is Glutathione S-transferase 1 (gst1) of Schizosaccharomyces pombe (strain 972 / ATCC 24843) (Fission yeast).